A 438-amino-acid polypeptide reads, in one-letter code: V-type ATP synthase beta chain (438 aa).

This sequence belongs to the ATPase alpha/beta chains family.

Functionally, produces ATP from ADP in the presence of a proton gradient across the membrane. The V-type beta chain is a regulatory subunit. The polypeptide is V-type ATP synthase beta chain (Chlamydia trachomatis serovar L2b (strain UCH-1/proctitis)).